The chain runs to 530 residues: Ubiquitin carboxyl-terminal hydrolase 17-like protein 11 (530 aa).

The region spanning 80 to 375 (AGLQNMGNTC…QAYVLFYIQK (296 aa)) is the USP domain. Cysteine 89 functions as the Nucleophile in the catalytic mechanism. The Proton acceptor role is filled by histidine 334. Composition is skewed to basic and acidic residues over residues 382 to 392 (SESVSRGREPR) and 398 to 413 (DTDR…RDHP). Disordered stretches follow at residues 382–413 (SESV…RDHP) and 509–530 (RGRA…LVCQ). Residues 510 to 524 (GRARRSKGKNKHSKR) show a composition bias toward basic residues.

The protein belongs to the peptidase C19 family. USP17 subfamily.

It is found in the nucleus. The protein resides in the endoplasmic reticulum. It carries out the reaction Thiol-dependent hydrolysis of ester, thioester, amide, peptide and isopeptide bonds formed by the C-terminal Gly of ubiquitin (a 76-residue protein attached to proteins as an intracellular targeting signal).. In terms of biological role, deubiquitinating enzyme that removes conjugated ubiquitin from specific proteins to regulate different cellular processes that may include cell proliferation, progression through the cell cycle, apoptosis, cell migration, and the cellular response to viral infection. This chain is Ubiquitin carboxyl-terminal hydrolase 17-like protein 11 (USP17L11), found in Homo sapiens (Human).